Consider the following 227-residue polypeptide: MNESIVISLGGSVISGDPIDADYLQSFAKILASSKFKRIGIVTGGGKTARSYISLLRSLGINENMLDEIGIYATRMNALSLASLLKGANPIIPSTVEEAVNLMSEYRFVVMGGTEPGHTTDTVAALLCERSDTDTLINITSVDGVYDLDPNKYKDARRFDTLGYREAITLSTGSSVGAGPNVFMDITALSIAMRSKIKVIVASRDLNNLKNILEGKPSVFTSIEEKA.

11–12 (GS) contacts ATP. Gly-45 is a binding site for UMP. The ATP site is built by Gly-46 and Arg-50. Residues Asp-67 and 114–120 (TEPGHTT) contribute to the UMP site. ATP contacts are provided by Thr-140, Tyr-146, and Asp-149.

It belongs to the UMP kinase family. Homohexamer.

The protein localises to the cytoplasm. The enzyme catalyses UMP + ATP = UDP + ADP. It functions in the pathway pyrimidine metabolism; CTP biosynthesis via de novo pathway; UDP from UMP (UMPK route): step 1/1. Inhibited by UTP. Its function is as follows. Catalyzes the reversible phosphorylation of UMP to UDP. The polypeptide is Uridylate kinase (Thermoplasma volcanium (strain ATCC 51530 / DSM 4299 / JCM 9571 / NBRC 15438 / GSS1)).